A 647-amino-acid polypeptide reads, in one-letter code: Frizzled-1 (647 aa).

Positions 1–69 are cleaved as a signal peptide; the sequence is MAEEEAPKKS…WLLEAPLLLG (69 aa). Residues 73–322 are Extracellular-facing; that stretch reads QAAGQGPGQG…PEELRFSRTW (250 aa). Positions 74–104 are disordered; sequence AAGQGPGQGPGPGQQPPPPPQQQQSGQQYNG. Positions 111 to 230 constitute an FZ domain; it reads PDHGYCQPIS…HGAGELCVGQ (120 aa). 5 cysteine pairs are disulfide-bonded: cysteine 116/cysteine 177, cysteine 124/cysteine 170, cysteine 161/cysteine 198, cysteine 187/cysteine 227, and cysteine 191/cysteine 215. Asparagine 130 carries an N-linked (GlcNAc...) asparagine glycan. N-linked (GlcNAc...) asparagine glycosylation occurs at asparagine 231. Residues 323–343 form a helical membrane-spanning segment; the sequence is IGIWSVLCCASTLFTVLTYLV. At 344–354 the chain is on the cytoplasmic side; it reads DMRRFSYPERP. Residues 355–375 traverse the membrane as a helical segment; sequence IIFLSGCYTAVAVAYIAGFLL. Over 376–402 the chain is Extracellular; the sequence is EDRVVCNDKFAEDGARTVAQGTKKEGC. A helical membrane pass occupies residues 403 to 423; the sequence is TILFMMLYFFSMASSIWWVIL. Residues 424–445 lie on the Cytoplasmic side of the membrane; it reads SLTWFLAAGMKWGHEAIEANSQ. The chain crosses the membrane as a helical span at residues 446–466; the sequence is YFHLAAWAVPAIKTITILALG. Over 467–489 the chain is Extracellular; it reads QVDGDVLSGVCFVGLNNVDALRG. Residues 490–510 traverse the membrane as a helical segment; that stretch reads FVLAPLFVYLFIGTSFLLAGF. Residues 511-536 are Cytoplasmic-facing; the sequence is VSLFRIRTIMKHDGTKTEKLEKLMVR. The helical transmembrane segment at 537–557 threads the bilayer; the sequence is IGVFSVLYTVPATIVIACYFY. Residues 558-601 are Extracellular-facing; the sequence is EQAFRDQWERSWVAQSCKSYAIPCPHLQAGGGAPPHPPMSPDFT. The helical transmembrane segment at 602–622 threads the bilayer; it reads VFMIKYLMTLIVGITSGFWIW. Residues 623-647 are Cytoplasmic-facing; it reads SGKTLNSWRKFYTRLTNSKQGETTV. The short motif at 625–630 is the Lys-Thr-X-X-X-Trp motif, mediates interaction with the PDZ domain of Dvl family members element; it reads KTLNSW. The short motif at 645–647 is the PDZ-binding element; that stretch reads TTV.

The protein belongs to the G-protein coupled receptor Fz/Smo family. Interacts with MYOC. Interacts with WNT7B. In terms of assembly, (Microbial infection) Interacts with C.difficile toxin TcdB; frizzled receptors constitute the major host receptors for TcdB in the colonic epithelium. In terms of processing, ubiquitinated by ZNRF3, leading to its degradation by the proteasome. As to expression, expressed in adult heart, placenta, lung, kidney, pancreas, prostate, and ovary and in fetal lung and kidney.

The protein localises to the cell membrane. In terms of biological role, receptor for Wnt proteins. Activated by WNT3A, WNT3, WNT1 and to a lesser extent WNT2, but apparently not by WNT4, WNT5A, WNT5B, WNT6, WNT7A or WNT7B. Contradictory results showing activation by WNT7B have been described for mouse. Functions in the canonical Wnt/beta-catenin signaling pathway. The canonical Wnt/beta-catenin signaling pathway leads to the activation of disheveled proteins, inhibition of GSK-3 kinase, nuclear accumulation of beta-catenin and activation of Wnt target genes. A second signaling pathway involving PKC and calcium fluxes has been seen for some family members, but it is not yet clear if it represents a distinct pathway or if it can be integrated in the canonical pathway, as PKC seems to be required for Wnt-mediated inactivation of GSK-3 kinase. Both pathways seem to involve interactions with G-proteins. May be involved in transduction and intercellular transmission of polarity information during tissue morphogenesis and/or in differentiated tissues. Its function is as follows. (Microbial infection) Acts as a receptor for C.difficile toxin TcdB in the colonic epithelium. The sequence is that of Frizzled-1 (FZD1) from Homo sapiens (Human).